The following is a 631-amino-acid chain: 1-deoxy-D-xylulose-5-phosphate synthase (631 aa).

Residues H87 and 128–130 (GHS) contribute to the thiamine diphosphate site. D159 provides a ligand contact to Mg(2+). Thiamine diphosphate-binding positions include 160-161 (GA), N188, F295, and E377. N188 contacts Mg(2+).

It belongs to the transketolase family. DXPS subfamily. As to quaternary structure, homodimer. It depends on Mg(2+) as a cofactor. Thiamine diphosphate is required as a cofactor.

The enzyme catalyses D-glyceraldehyde 3-phosphate + pyruvate + H(+) = 1-deoxy-D-xylulose 5-phosphate + CO2. The protein operates within metabolic intermediate biosynthesis; 1-deoxy-D-xylulose 5-phosphate biosynthesis; 1-deoxy-D-xylulose 5-phosphate from D-glyceraldehyde 3-phosphate and pyruvate: step 1/1. Functionally, catalyzes the acyloin condensation reaction between C atoms 2 and 3 of pyruvate and glyceraldehyde 3-phosphate to yield 1-deoxy-D-xylulose-5-phosphate (DXP). The protein is 1-deoxy-D-xylulose-5-phosphate synthase of Pseudomonas putida (strain ATCC 47054 / DSM 6125 / CFBP 8728 / NCIMB 11950 / KT2440).